A 418-amino-acid polypeptide reads, in one-letter code: 26S proteasome regulatory subunit 6B (418 aa).

Met1 is modified (N-acetylmethionine). Ser21 is modified (phosphoserine). Thr25 is subject to Phosphothreonine. A Phosphoserine modification is found at Ser28. Residue 206–213 participates in ATP binding; sequence GPPGCGKT. Lys397 and Lys401 each carry N6-acetyllysine.

Belongs to the AAA ATPase family. Component of the 19S proteasome regulatory particle complex. The 26S proteasome consists of a 20S core particle (CP) and two 19S regulatory subunits (RP). The regulatory particle is made of a lid composed of 9 subunits, a base containing 6 ATPases including PSMC4 and few additional components. Interacts with NR1I3. Interacts with PAAF1. Interacts with TRIM5. Interacts with ZFAND1.

Its subcellular location is the cytoplasm. The protein resides in the nucleus. Functionally, component of the 26S proteasome, a multiprotein complex involved in the ATP-dependent degradation of ubiquitinated proteins. This complex plays a key role in the maintenance of protein homeostasis by removing misfolded or damaged proteins, which could impair cellular functions, and by removing proteins whose functions are no longer required. Therefore, the proteasome participates in numerous cellular processes, including cell cycle progression, apoptosis, or DNA damage repair. PSMC4 belongs to the heterohexameric ring of AAA (ATPases associated with diverse cellular activities) proteins that unfolds ubiquitinated target proteins that are concurrently translocated into a proteolytic chamber and degraded into peptides. The protein is 26S proteasome regulatory subunit 6B (Psmc4) of Mus musculus (Mouse).